Reading from the N-terminus, the 156-residue chain is Putative pre-16S rRNA nuclease (156 aa).

The protein belongs to the YqgF nuclease family.

Its subcellular location is the cytoplasm. Functionally, could be a nuclease involved in processing of the 5'-end of pre-16S rRNA. The protein is Putative pre-16S rRNA nuclease of Ehrlichia chaffeensis (strain ATCC CRL-10679 / Arkansas).